Consider the following 78-residue polypeptide: Large ribosomal subunit protein bL28 (78 aa).

The segment at 1–23 is disordered; that stretch reads MSRICQITGKKPLSGNKRSHSMN.

The protein belongs to the bacterial ribosomal protein bL28 family.

This is Large ribosomal subunit protein bL28 from Wigglesworthia glossinidia brevipalpis.